Reading from the N-terminus, the 128-residue chain is Large ribosomal subunit protein bL12 (128 aa).

This sequence belongs to the bacterial ribosomal protein bL12 family. As to quaternary structure, homodimer. Part of the ribosomal stalk of the 50S ribosomal subunit. Forms a multimeric L10(L12)X complex, where L10 forms an elongated spine to which 2 to 4 L12 dimers bind in a sequential fashion. Binds GTP-bound translation factors.

Forms part of the ribosomal stalk which helps the ribosome interact with GTP-bound translation factors. Is thus essential for accurate translation. The chain is Large ribosomal subunit protein bL12 from Kineococcus radiotolerans (strain ATCC BAA-149 / DSM 14245 / SRS30216).